The primary structure comprises 214 residues: MQDYKIEFIKFALSRNVLRFGEFKLKSGRVSPYFFNAGLFNTGADLARLGEFYAAAIQANRLAYDVIFGPAYKGIPIGTTVSVALFNRFGLDKPVCFNRKEAKDHGEGGNLIGSPLQGNVLLVDDVITAGTAIREAMDIIAANGATLSAVVIALNRKERGKGELSAVQEVERDYQCRVLSIIELDDLLAFLETDSEYSRYLPSMKAYREQFGVA.

Lys-26 provides a ligand contact to 5-phospho-alpha-D-ribose 1-diphosphate. 34–35 contributes to the orotate binding site; sequence FF. 5-phospho-alpha-D-ribose 1-diphosphate contacts are provided by residues 72 to 73, Arg-99, Lys-100, Lys-103, His-105, and 124 to 132; these read YK and DDVITAGTA. Orotate is bound by residues Thr-128 and Arg-156.

This sequence belongs to the purine/pyrimidine phosphoribosyltransferase family. PyrE subfamily. As to quaternary structure, homodimer. Mg(2+) serves as cofactor.

The enzyme catalyses orotidine 5'-phosphate + diphosphate = orotate + 5-phospho-alpha-D-ribose 1-diphosphate. Its pathway is pyrimidine metabolism; UMP biosynthesis via de novo pathway; UMP from orotate: step 1/2. Catalyzes the transfer of a ribosyl phosphate group from 5-phosphoribose 1-diphosphate to orotate, leading to the formation of orotidine monophosphate (OMP). In Actinobacillus succinogenes (strain ATCC 55618 / DSM 22257 / CCUG 43843 / 130Z), this protein is Orotate phosphoribosyltransferase.